The following is a 521-amino-acid chain: Acetylcholine receptor subunit beta-like 1 (521 aa).

Residues methionine 1–alanine 24 form the signal peptide. The Extracellular segment spans residues serine 25–lysine 235. N-linked (GlcNAc...) asparagine glycosylation occurs at asparagine 48. Cysteine 152 and cysteine 166 are disulfide-bonded. A run of 3 helical transmembrane segments spans residues threonine 236–leucine 260, valine 268–serine 286, and tyrosine 302–tryptophan 323. The Cytoplasmic segment spans residues asparagine 324–arginine 481. The helical transmembrane segment at leucine 482–methionine 500 threads the bilayer.

The protein belongs to the ligand-gated ion channel (TC 1.A.9) family. Acetylcholine receptor (TC 1.A.9.1) subfamily. As to expression, CNS in embryos.

Its subcellular location is the postsynaptic cell membrane. The protein resides in the cell membrane. In terms of biological role, after binding acetylcholine, the AChR responds by an extensive change in conformation that affects all subunits and leads to opening of an ion-conducting channel across the plasma membrane. The chain is Acetylcholine receptor subunit beta-like 1 (nAChRbeta1) from Drosophila melanogaster (Fruit fly).